A 348-amino-acid chain; its full sequence is Carbamoyl phosphate synthase small chain (348 aa).

Residues 1-167 (MKRYLITSDG…VKNIRGKGER (167 aa)) are CPSase. Positions 45, 213, and 215 each coordinate L-glutamine. In terms of domain architecture, Glutamine amidotransferase type-1 spans 168–348 (RILFIDLGSK…RRRTEDAAKG (181 aa)). Residue Cys242 is the Nucleophile of the active site. Residues Phe243, Gln246, Asn282, Gly284, and Tyr285 each coordinate L-glutamine. Catalysis depends on residues His321 and Glu323.

This sequence belongs to the CarA family. In terms of assembly, composed of two chains; the small (or glutamine) chain promotes the hydrolysis of glutamine to ammonia, which is used by the large (or ammonia) chain to synthesize carbamoyl phosphate. Tetramer of heterodimers (alpha,beta)4.

It carries out the reaction hydrogencarbonate + L-glutamine + 2 ATP + H2O = carbamoyl phosphate + L-glutamate + 2 ADP + phosphate + 2 H(+). The enzyme catalyses L-glutamine + H2O = L-glutamate + NH4(+). Its pathway is amino-acid biosynthesis; L-arginine biosynthesis; carbamoyl phosphate from bicarbonate: step 1/1. It functions in the pathway pyrimidine metabolism; UMP biosynthesis via de novo pathway; (S)-dihydroorotate from bicarbonate: step 1/3. In terms of biological role, small subunit of the glutamine-dependent carbamoyl phosphate synthetase (CPSase). CPSase catalyzes the formation of carbamoyl phosphate from the ammonia moiety of glutamine, carbonate, and phosphate donated by ATP, constituting the first step of 2 biosynthetic pathways, one leading to arginine and/or urea and the other to pyrimidine nucleotides. The small subunit (glutamine amidotransferase) binds and cleaves glutamine to supply the large subunit with the substrate ammonia. This chain is Carbamoyl phosphate synthase small chain, found in Thermoplasma acidophilum (strain ATCC 25905 / DSM 1728 / JCM 9062 / NBRC 15155 / AMRC-C165).